A 422-amino-acid polypeptide reads, in one-letter code: UDP-N-acetylglucosamine 1-carboxyvinyltransferase (422 aa).

22–23 (KN) is a binding site for phosphoenolpyruvate. Arginine 92 serves as a coordination point for UDP-N-acetyl-alpha-D-glucosamine. Cysteine 116 serves as the catalytic Proton donor. Cysteine 116 carries the 2-(S-cysteinyl)pyruvic acid O-phosphothioketal modification. Aspartate 306 and isoleucine 328 together coordinate UDP-N-acetyl-alpha-D-glucosamine.

It belongs to the EPSP synthase family. MurA subfamily.

It is found in the cytoplasm. It catalyses the reaction phosphoenolpyruvate + UDP-N-acetyl-alpha-D-glucosamine = UDP-N-acetyl-3-O-(1-carboxyvinyl)-alpha-D-glucosamine + phosphate. It functions in the pathway cell wall biogenesis; peptidoglycan biosynthesis. Functionally, cell wall formation. Adds enolpyruvyl to UDP-N-acetylglucosamine. This Elusimicrobium minutum (strain Pei191) protein is UDP-N-acetylglucosamine 1-carboxyvinyltransferase.